We begin with the raw amino-acid sequence, 508 residues long: Mitochondrial distribution and morphology protein 10 (508 aa).

The disordered stretch occupies residues 160–195; that stretch reads PAHPTSTRPTPPQTPPSHTRQPSEPSTPAPSPTPGN.

The protein belongs to the MDM10 family. As to quaternary structure, component of the ER-mitochondria encounter structure (ERMES) or MDM complex, composed of MMM1, MDM10, MDM12 and MDM34. Associates with the mitochondrial outer membrane sorting assembly machinery SAM(core) complex.

It localises to the mitochondrion outer membrane. Component of the ERMES/MDM complex, which serves as a molecular tether to connect the endoplasmic reticulum and mitochondria. Components of this complex are involved in the control of mitochondrial shape and protein biogenesis and may function in phospholipid exchange. MDM10 is involved in the late assembly steps of the general translocase of the mitochondrial outer membrane (TOM complex). Functions in the TOM40-specific route of the assembly of outer membrane beta-barrel proteins, including the association of TOM40 with the receptor TOM22 and small TOM proteins. Can associate with the SAM(core) complex as well as the MDM12-MMM1 complex, both involved in late steps of the major beta-barrel assembly pathway, that is responsible for biogenesis of all outer membrane beta-barrel proteins. May act as a switch that shuttles between both complexes and channels precursor proteins into the TOM40-specific pathway. Plays a role in mitochondrial morphology and in the inheritance of mitochondria. This chain is Mitochondrial distribution and morphology protein 10, found in Cryptococcus neoformans var. neoformans serotype D (strain JEC21 / ATCC MYA-565) (Filobasidiella neoformans).